Reading from the N-terminus, the 473-residue chain is ATP synthase subunit beta (473 aa).

An ATP-binding site is contributed by Gly-153 to Thr-160.

It belongs to the ATPase alpha/beta chains family. F-type ATPases have 2 components, CF(1) - the catalytic core - and CF(0) - the membrane proton channel. CF(1) has five subunits: alpha(3), beta(3), gamma(1), delta(1), epsilon(1). CF(0) has three main subunits: a(1), b(2) and c(9-12). The alpha and beta chains form an alternating ring which encloses part of the gamma chain. CF(1) is attached to CF(0) by a central stalk formed by the gamma and epsilon chains, while a peripheral stalk is formed by the delta and b chains.

The protein resides in the cell inner membrane. It catalyses the reaction ATP + H2O + 4 H(+)(in) = ADP + phosphate + 5 H(+)(out). Produces ATP from ADP in the presence of a proton gradient across the membrane. The catalytic sites are hosted primarily by the beta subunits. In Rickettsia bellii (strain RML369-C), this protein is ATP synthase subunit beta.